Reading from the N-terminus, the 178-residue chain is Deoxycytidylate deaminase (178 aa).

The CMP/dCMP-type deaminase domain occupies 14 to 146 (EWPEYFMAVA…EATAARLLFD (133 aa)). A Zn(2+)-binding site is contributed by histidine 84. The Proton donor role is filled by glutamate 86. Residues cysteine 110 and cysteine 113 each coordinate Zn(2+). At serine 174 the chain carries Phosphoserine.

It belongs to the cytidine and deoxycytidylate deaminase family. In terms of assembly, homohexamer. Zn(2+) serves as cofactor.

It catalyses the reaction dCMP + H2O + H(+) = dUMP + NH4(+). The enzyme catalyses 5-hydroxymethyl-dCMP + H2O + H(+) = 5-hydroxymethyl-dUMP + NH4(+). Its activity is regulated as follows. Allosteric enzyme whose activity is greatly influenced by the end products of its metabolic pathway, dCTP and dTTP. Catalyzes the deamination of dCMP to dUMP, providing the nucleoside monophosphate substrate for the thymidylate synthase/TYMS. Also, part of a nucleotide salvage pathway that eliminates epigenetically modified 5-hydroxymethyl-dCMP (hmdCMP) in a two-step process entailing deamination to cytotoxic 5-hydroxymethyl-dUMP (hmdUMP), followed by its hydrolysis into 5-hydroxymethyluracil (hmU) and 2-deoxy-D-ribose 5-phosphate (deoxyribosephosphate). Catalyzes the first step in that pathway, the deamination of 5-hydroxymethyl-dCMP (hmdCMP). The chain is Deoxycytidylate deaminase from Pongo abelii (Sumatran orangutan).